The sequence spans 30 residues: Mycofactocin precursor peptide (30 aa).

The protein belongs to the mycofactocin precursor peptide family. In terms of assembly, interacts with MftB. The post-translational modifications that lead to mycofactocin involve oxidative decarboxylation of the C-terminal tyrosine residue catalyzed by MftC, introduction of a tyramine-valine cross-link, removal of the modified C-terminal dipeptide by MftE. The released dipeptide then undergoes oxidative deamination by MftD, glycosylation by MftF and methylation by an unknown enzyme.

In terms of biological role, precursor peptide that leads to mycofactocin (MFT) after extensive post-translational modifications by enzymes encoded by adjacent genes. Mycofactocin acts as a redox cofactor of nicotinamide-dependent oxidoreductases encoded in the same locus. The polypeptide is Mycofactocin precursor peptide (Mycobacterium ulcerans (strain Agy99)).